The sequence spans 519 residues: 2,3-bisphosphoglycerate-independent phosphoglycerate mutase (519 aa).

Aspartate 18 and serine 68 together coordinate Mn(2+). Serine 68 functions as the Phosphoserine intermediate in the catalytic mechanism. Substrate-binding positions include histidine 129, 159-160 (RD), arginine 191, arginine 197, 267-270 (RADR), and lysine 341. Mn(2+)-binding residues include aspartate 408, histidine 412, aspartate 449, histidine 450, and histidine 468.

Belongs to the BPG-independent phosphoglycerate mutase family. As to quaternary structure, monomer. It depends on Mn(2+) as a cofactor.

The enzyme catalyses (2R)-2-phosphoglycerate = (2R)-3-phosphoglycerate. It functions in the pathway carbohydrate degradation; glycolysis; pyruvate from D-glyceraldehyde 3-phosphate: step 3/5. In terms of biological role, catalyzes the interconversion of 2-phosphoglycerate and 3-phosphoglycerate. The chain is 2,3-bisphosphoglycerate-independent phosphoglycerate mutase from Coxiella burnetii (strain RSA 331 / Henzerling II).